Reading from the N-terminus, the 41-residue chain is Large ribosomal subunit protein bL36 (41 aa).

It belongs to the bacterial ribosomal protein bL36 family.

In Pelagibacter ubique (strain HTCC1062), this protein is Large ribosomal subunit protein bL36.